Consider the following 156-residue polypeptide: Small ribosomal subunit protein uS7 (156 aa).

The protein belongs to the universal ribosomal protein uS7 family. Part of the 30S ribosomal subunit. Contacts proteins S9 and S11.

Its function is as follows. One of the primary rRNA binding proteins, it binds directly to 16S rRNA where it nucleates assembly of the head domain of the 30S subunit. Is located at the subunit interface close to the decoding center, probably blocks exit of the E-site tRNA. The protein is Small ribosomal subunit protein uS7 of Agrobacterium fabrum (strain C58 / ATCC 33970) (Agrobacterium tumefaciens (strain C58)).